The chain runs to 322 residues: MNLDYLDFEQPIAELEEKIQTLDNIKGKANIKDKADIINKIKALKSKSNALTKKIFSSLSDWQISQLARHPKRLYTLDYISDVFDEFTELHGDRTYGDDHAIIGGIATLDNQPVMFIGQQKGRTTQEKIKYNFGMPRPEGYRKALRLMKLAEKFSMPIVTFIDTPGAYPGIGAEERGQSEAIAKNLFEMSTLPTPIISIVIGEGGSGGALAIGVADIIMMFEYSIYSVISPEGCASILYKDVTKANLAAESLKLTSIHLKKERLIDVVINEPLGGIHRNPSQAKVLLKEVLTQQLNKIKQLPIEQLLQNRQKKLLGFGKFKD.

Residues 43–297 (ALKSKSNALT…KEVLTQQLNK (255 aa)) enclose the CoA carboxyltransferase C-terminal domain.

This sequence belongs to the AccA family. In terms of assembly, acetyl-CoA carboxylase is a heterohexamer composed of biotin carboxyl carrier protein (AccB), biotin carboxylase (AccC) and two subunits each of ACCase subunit alpha (AccA) and ACCase subunit beta (AccD).

It is found in the cytoplasm. The catalysed reaction is N(6)-carboxybiotinyl-L-lysyl-[protein] + acetyl-CoA = N(6)-biotinyl-L-lysyl-[protein] + malonyl-CoA. Its pathway is lipid metabolism; malonyl-CoA biosynthesis; malonyl-CoA from acetyl-CoA: step 1/1. Functionally, component of the acetyl coenzyme A carboxylase (ACC) complex. First, biotin carboxylase catalyzes the carboxylation of biotin on its carrier protein (BCCP) and then the CO(2) group is transferred by the carboxyltransferase to acetyl-CoA to form malonyl-CoA. The chain is Acetyl-coenzyme A carboxylase carboxyl transferase subunit alpha from Vesicomyosocius okutanii subsp. Calyptogena okutanii (strain HA).